The primary structure comprises 755 residues: Zinc transporter ZIP6 (755 aa).

The N-terminal stretch at 1–28 (MARKLSVILILTFALSVTNPLHELKAAA) is a signal peptide. The Extracellular portion of the chain corresponds to 29 to 325 (FPQTTEKISP…PKTYSLQIAW (297 aa)). An N-linked (GlcNAc...) asparagine glycan is attached at Asn67. Residues 95-128 (DHDHHSDHEHHSDHERHSDHEHHSEHEHHSDHDH) are compositionally biased toward basic and acidic residues. 2 disordered regions span residues 95–186 (DHDH…SASE) and 202–246 (LETI…SVSE). A compositionally biased stretch (basic residues) spans 129 to 144 (HSHHNHAASGKNKRKA). Composition is skewed to basic and acidic residues over residues 145–159 (LCPD…KDPR) and 167–179 (HRPE…RNVK). The segment covering 219–234 (SSSTPPSVTSKSRVSR) has biased composition (low complexity). N-linked (GlcNAc...) asparagine glycans are attached at residues Asn241, Asn266, and Asn283. Residues 326-346 (VGGFIAISIISFLSLLGVILV) traverse the membrane as a helical segment. The Cytoplasmic portion of the chain corresponds to 347–355 (PLMNRVFFK). Residues 356-376 (FLLSFLVALAVGTLSGDAFLH) form a helical membrane-spanning segment. Over 377-423 (LLPHSHASHHHSHSHEEPAMEMKRGPLFSHLSSQNIEESAYFDSTWK) the chain is Extracellular. Residues 424 to 444 (GLTALGGLYFMFLVEHVLTLI) traverse the membrane as a helical segment. Topologically, residues 445–657 (KQFKDKKKKN…LKAGMTVKQA (213 aa)) are cytoplasmic. A coiled-coil region spans residues 464–480 (VEIKKQLSKYESQLSTN). Residues Ser471 and Ser478 each carry the phosphoserine modification. A helical transmembrane segment spans residues 658-678 (VLYNALSAMLAYLGMATGIFI). Residues 679-686 (GHYAENVS) lie on the Extracellular side of the membrane. A glycan (N-linked (GlcNAc...) asparagine) is linked at Asn684. Residues 687 to 707 (MWIFALTAGLFMYVALVDMVP) form a helical membrane-spanning segment. Topologically, residues 708 to 724 (EMLHNDASDHGCSRWGY) are cytoplasmic. The chain crosses the membrane as a helical span at residues 725-745 (FFLQNAGMLLGFGIMLLISIF). The Extracellular segment spans residues 746–755 (EHKIVFRINF).

This sequence belongs to the ZIP transporter (TC 2.A.5) family. Interacts with SLC39A10; which triggers cells to undergo EMT and mitosis. Found in a complex with SLC39A6, SLC39A10 and with the 'Ser-727' phosphorylated form of STAT3 throughout mitosis. Found in a complex with SLC39A6, SLC39A10 and with NCAM1; this complex controls NCAM1 phosphorylation and integration into focal adhesion complexes during epithelial-to-mesenchymal transition (EMT). Found in a complex with SLC39A6, SLC39A10 and with GSK3B that controls NCAM1 phosphorylation. In terms of processing, cleaved on the N-terminus before locating to the plasma membrane. Post-translationally, N-glycosylated. Phosphorylated by ZAP70 in response to TCR stimulation leading to its activation. In terms of tissue distribution, highly expressed in the breast, prostate, placenta, kidney, pituitary and corpus callosum. Weakly expressed in heart and intestine. Also highly expressed in cells derived from an adenocarcinoma of the cervix and lung carcinoma.

The protein resides in the cell membrane. Its subcellular location is the cell projection. The protein localises to the lamellipodium membrane. It localises to the membrane raft. It is found in the apical cell membrane. It catalyses the reaction Zn(2+)(in) = Zn(2+)(out). Zinc-influx transporter which plays a role in zinc homeostasis and in the induction of epithelial-to-mesenchymal transition (EMT). When associated with SLC39A10, the heterodimer formed by SLC39A10 and SLC39A6 mediates cellular zinc uptake to trigger cells to undergo epithelial- to-mesenchymal transition (EMT). The SLC39A10-SLC39A6 heterodimer also controls NCAM1 phosphorylation and its integration into focal adhesion complexes during EMT. Zinc influx inactivates GSK3B, enabling unphosphorylated SNAI1 in the nucleus to down-regulate adherence genes such as CDH1, causing loss of cell adherence. In addition, the SLC39A10-SLC39A6 heterodimer plays an essentiel role in initiating mitosis by importing zinc into cells to initiate a pathway resulting in the onset of mitosis. Participates in the T-cell receptor signaling regulation by mediating cellular zinc uptake into activated lymphocytes. Regulates the zinc influx necessary for proper meiotic progression to metaphase II (MII) that allows the oocyte-to-egg transition. The polypeptide is Zinc transporter ZIP6 (Homo sapiens (Human)).